The primary structure comprises 108 residues: Glutaredoxin-C10 (108 aa).

The Glutaredoxin domain maps to Met1 to Trp107. The cysteines at positions 21 and 24 are disulfide-linked. Residues Ala105–Leu108 carry the Responsive for interaction with TGA factors motif.

Belongs to the glutaredoxin family. CC-type subfamily.

It is found in the cytoplasm. Its subcellular location is the nucleus. Its function is as follows. Has a glutathione-disulfide oxidoreductase activity in the presence of NADPH and glutathione reductase. Reduces low molecular weight disulfides and proteins. The polypeptide is Glutaredoxin-C10 (GRXC10) (Oryza sativa subsp. japonica (Rice)).